The chain runs to 270 residues: MPELPEVETTRRGIAPHLEGQRVSRVVVRERRLRWPIPEDLDVRLSGQRIVLVERRAKYLLINAEVGTLISHLGMSGNLRLVEVGLPAAKHEHVDIELESGMALRYTDPRRFGAMLWSQDPHNHELLLRLGPEPLTELFDGDRLFQLSRGKSMAVKPFIMDNAVVVGVGNIYATEALFAAGIDPRRAAGGISRGRYLKLAIEIKRVLAAAIERGGTTLRDFIGGDGQPGYFQQELFVYGRGGEACKVCGTELRNVVLGQRASVFCPRCQR.

The Schiff-base intermediate with DNA role is filled by Pro2. Residue Glu3 is the Proton donor of the active site. Residue Lys58 is the Proton donor; for beta-elimination activity of the active site. Positions 91, 110, and 151 each coordinate DNA. The FPG-type zinc-finger motif lies at 236 to 270; it reads FVYGRGGEACKVCGTELRNVVLGQRASVFCPRCQR. Catalysis depends on Arg260, which acts as the Proton donor; for delta-elimination activity.

The protein belongs to the FPG family. In terms of assembly, monomer. Zn(2+) serves as cofactor.

It carries out the reaction Hydrolysis of DNA containing ring-opened 7-methylguanine residues, releasing 2,6-diamino-4-hydroxy-5-(N-methyl)formamidopyrimidine.. It catalyses the reaction 2'-deoxyribonucleotide-(2'-deoxyribose 5'-phosphate)-2'-deoxyribonucleotide-DNA = a 3'-end 2'-deoxyribonucleotide-(2,3-dehydro-2,3-deoxyribose 5'-phosphate)-DNA + a 5'-end 5'-phospho-2'-deoxyribonucleoside-DNA + H(+). Its function is as follows. Involved in base excision repair of DNA damaged by oxidation or by mutagenic agents. Acts as a DNA glycosylase that recognizes and removes damaged bases. Has a preference for oxidized purines, such as 7,8-dihydro-8-oxoguanine (8-oxoG). Has AP (apurinic/apyrimidinic) lyase activity and introduces nicks in the DNA strand. Cleaves the DNA backbone by beta-delta elimination to generate a single-strand break at the site of the removed base with both 3'- and 5'-phosphates. This is Formamidopyrimidine-DNA glycosylase from Pseudomonas fluorescens (strain SBW25).